The following is a 163-amino-acid chain: Neurotrophin-3 (163 aa).

Positions 1 to 3 (IQS) are cleaved as a signal peptide. Residues 4–119 (TSMDQGILTE…VLNRTSRRKR (116 aa)) constitute a propeptide that is removed on maturation. The N-linked (GlcNAc...) asparagine glycan is linked to Asn112.

This sequence belongs to the NGF-beta family.

It is found in the secreted. In terms of biological role, seems to promote the survival of visceral and proprioceptive sensory neurons. The protein is Neurotrophin-3 (NTF3) of Chilabothrus striatus (Haitian boa constrictor).